A 337-amino-acid chain; its full sequence is Biotin synthase (337 aa).

The Radical SAM core domain occupies 52-281 (ADIQRASLLS…RSRVRLSAGR (230 aa)). Positions 67, 71, and 74 each coordinate [4Fe-4S] cluster. Positions 112, 144, 204, and 276 each coordinate [2Fe-2S] cluster.

It belongs to the radical SAM superfamily. Biotin synthase family. As to quaternary structure, homodimer. It depends on [4Fe-4S] cluster as a cofactor. Requires [2Fe-2S] cluster as cofactor.

The enzyme catalyses (4R,5S)-dethiobiotin + (sulfur carrier)-SH + 2 reduced [2Fe-2S]-[ferredoxin] + 2 S-adenosyl-L-methionine = (sulfur carrier)-H + biotin + 2 5'-deoxyadenosine + 2 L-methionine + 2 oxidized [2Fe-2S]-[ferredoxin]. It functions in the pathway cofactor biosynthesis; biotin biosynthesis; biotin from 7,8-diaminononanoate: step 2/2. Functionally, catalyzes the conversion of dethiobiotin (DTB) to biotin by the insertion of a sulfur atom into dethiobiotin via a radical-based mechanism. The sequence is that of Biotin synthase from Methylobacterium radiotolerans (strain ATCC 27329 / DSM 1819 / JCM 2831 / NBRC 15690 / NCIMB 10815 / 0-1).